The primary structure comprises 714 residues: Polyribonucleotide nucleotidyltransferase (714 aa).

Aspartate 488 and aspartate 494 together coordinate Mg(2+). The KH domain occupies 555 to 614 (PRIEVMNIPTDKIRDVIGSGGKVIREIVEKTGAKINIEDDGTVKIASSNGKEIEAAKKWI). Residues 624 to 692 (GEIYEGTVVK…ERGKVRLSMK (69 aa)) enclose the S1 motif domain.

It belongs to the polyribonucleotide nucleotidyltransferase family. Mg(2+) is required as a cofactor.

The protein localises to the cytoplasm. The enzyme catalyses RNA(n+1) + phosphate = RNA(n) + a ribonucleoside 5'-diphosphate. Involved in mRNA degradation. Catalyzes the phosphorolysis of single-stranded polyribonucleotides processively in the 3'- to 5'-direction. This is Polyribonucleotide nucleotidyltransferase from Brucella melitensis biotype 2 (strain ATCC 23457).